A 181-amino-acid polypeptide reads, in one-letter code: Adenylyl-sulfate kinase (181 aa).

Residue 13–20 (GVSGAGKS) participates in ATP binding. Catalysis depends on serine 87, which acts as the Phosphoserine intermediate.

Belongs to the APS kinase family.

It catalyses the reaction adenosine 5'-phosphosulfate + ATP = 3'-phosphoadenylyl sulfate + ADP + H(+). The protein operates within sulfur metabolism; hydrogen sulfide biosynthesis; sulfite from sulfate: step 2/3. Catalyzes the synthesis of activated sulfate. The sequence is that of Adenylyl-sulfate kinase from Burkholderia ambifaria (strain ATCC BAA-244 / DSM 16087 / CCUG 44356 / LMG 19182 / AMMD) (Burkholderia cepacia (strain AMMD)).